A 633-amino-acid polypeptide reads, in one-letter code: Glutamyl-tRNA(Gln) amidotransferase subunit E (633 aa).

It belongs to the GatB/GatE family. GatE subfamily. Heterodimer of GatD and GatE.

It carries out the reaction L-glutamyl-tRNA(Gln) + L-glutamine + ATP + H2O = L-glutaminyl-tRNA(Gln) + L-glutamate + ADP + phosphate + H(+). Allows the formation of correctly charged Gln-tRNA(Gln) through the transamidation of misacylated Glu-tRNA(Gln) in organisms which lack glutaminyl-tRNA synthetase. The reaction takes place in the presence of glutamine and ATP through an activated gamma-phospho-Glu-tRNA(Gln). The GatDE system is specific for glutamate and does not act on aspartate. This Methanosarcina barkeri (strain Fusaro / DSM 804) protein is Glutamyl-tRNA(Gln) amidotransferase subunit E.